The primary structure comprises 200 residues: NAD(P)H dehydrogenase (quinone) (200 aa).

One can recognise a Flavodoxin-like domain in the interval 4–191 (VLVLYYSSYG…DIARYQGKHV (188 aa)). FMN contacts are provided by residues 10–15 (SSYGHV) and 79–81 (TRF). NAD(+) is bound at residue tyrosine 12. Tryptophan 99 contacts substrate. FMN-binding positions include 114 to 120 (STGTQHG) and histidine 135.

Belongs to the WrbA family. The cofactor is FMN.

The enzyme catalyses a quinone + NADH + H(+) = a quinol + NAD(+). It catalyses the reaction a quinone + NADPH + H(+) = a quinol + NADP(+). The chain is NAD(P)H dehydrogenase (quinone) from Burkholderia cenocepacia (strain HI2424).